Reading from the N-terminus, the 203-residue chain is Selenocysteine-containing peroxiredoxin PrxU (203 aa).

Residues 2–160 (VSVGKKAPDF…TLRQIQAFQL (159 aa)) enclose the Thioredoxin domain. The active site involves Sec47. Residue Sec47 is a non-standard amino acid, selenocysteine.

The protein belongs to the peroxiredoxin family. AhpC/Prx1 subfamily.

The enzyme catalyses a hydroperoxide + [thioredoxin]-dithiol = an alcohol + [thioredoxin]-disulfide + H2O. Its function is as follows. Thiol-specific peroxidase that catalyzes the reduction of hydrogen peroxide and organic hydroperoxides to water and alcohols, respectively. Plays a role in cell protection against oxidative stress by detoxifying peroxides. This Peptoclostridium acidaminophilum (Eubacterium acidaminophilum) protein is Selenocysteine-containing peroxiredoxin PrxU.